The chain runs to 311 residues: Glycerol-3-phosphate dehydrogenase [NAD(P)+] (311 aa).

The NADPH site is built by Trp-12, Arg-31, Arg-32, and Lys-96. Sn-glycerol 3-phosphate is bound by residues Lys-96, Gly-124, and Ser-126. Ala-128 lines the NADPH pocket. Positions 178, 231, 241, 242, and 243 each coordinate sn-glycerol 3-phosphate. Catalysis depends on Lys-178, which acts as the Proton acceptor. Arg-242 provides a ligand contact to NADPH. Residues Val-266 and Glu-268 each contribute to the NADPH site.

The protein belongs to the NAD-dependent glycerol-3-phosphate dehydrogenase family.

Its subcellular location is the cytoplasm. It carries out the reaction sn-glycerol 3-phosphate + NAD(+) = dihydroxyacetone phosphate + NADH + H(+). It catalyses the reaction sn-glycerol 3-phosphate + NADP(+) = dihydroxyacetone phosphate + NADPH + H(+). The protein operates within membrane lipid metabolism; glycerophospholipid metabolism. Its function is as follows. Catalyzes the reduction of the glycolytic intermediate dihydroxyacetone phosphate (DHAP) to sn-glycerol 3-phosphate (G3P), the key precursor for phospholipid synthesis. The sequence is that of Glycerol-3-phosphate dehydrogenase [NAD(P)+] from Helicobacter hepaticus (strain ATCC 51449 / 3B1).